The primary structure comprises 95 residues: uncharacterized protein (95 aa).

Residues 3–23 traverse the membrane as a helical segment; the sequence is FVIIIAILLLGISLILAFTVL.

It localises to the membrane. This is an uncharacterized protein from Methanocaldococcus jannaschii (strain ATCC 43067 / DSM 2661 / JAL-1 / JCM 10045 / NBRC 100440) (Methanococcus jannaschii).